The sequence spans 197 residues: Carnitine operon protein CaiE (197 aa).

It belongs to the transferase hexapeptide repeat family.

The protein operates within amine and polyamine metabolism; carnitine metabolism. In terms of biological role, overproduction of CaiE stimulates the activity of CaiB and CaiD. This Citrobacter koseri (strain ATCC BAA-895 / CDC 4225-83 / SGSC4696) protein is Carnitine operon protein CaiE.